The following is an 85-amino-acid chain: Large ribosomal subunit protein bL27 (85 aa).

A disordered region spans residues 1–22 (MAHKKAAGSTRNGRDSESKRLG).

This sequence belongs to the bacterial ribosomal protein bL27 family.

The sequence is that of Large ribosomal subunit protein bL27 from Pseudoalteromonas translucida (strain TAC 125).